Reading from the N-terminus, the 480-residue chain is Putative auxin transporter-like protein 4 (480 aa).

Topologically, residues 1–66 (MASEKVETIV…DAWFSCASNQ (66 aa)) are cytoplasmic. A helical transmembrane segment spans residues 67–84 (VAQVLLTLPYSFSQLGMA). Residues 85-86 (SG) lie on the Extracellular side of the membrane. A helical membrane pass occupies residues 87–107 (VAFQVFYGLMGSWTAYLISVL). Over 108-143 (YVEYRTRRERDKVDFRNHVIQWFEVLDGLLGRHWRN) the chain is Cytoplasmic. A helical transmembrane segment spans residues 144–164 (AGLLFNCTFLLFGSVIQLIAC). At 165 to 179 (ASNIYYINDRLDKRT) the chain is on the extracellular side. A helical transmembrane segment spans residues 180 to 200 (WTYIFGACCATTVFVPSFHNY). Topologically, residues 201 to 203 (RVW) are cytoplasmic. Residues 204 to 224 (SFLGLLMTSYTAWYLTVAAVV) form a helical membrane-spanning segment. The Extracellular portion of the chain corresponds to 225-241 (HGKVDGAAPRAGPSKTM). Residues 242–262 (VLYFTGATNILYTFGGHAVTV) form a helical membrane-spanning segment. The Cytoplasmic segment spans residues 263–275 (EIMHAMWRPRRFK). Residues 276-296 (MIYLAATAYVLTLTLPSAAAM) traverse the membrane as a helical segment. Over 297–323 (YWAFGDALLDHSNAFALLPRTPWRDAA) the chain is Extracellular. The chain crosses the membrane as a helical span at residues 324–344 (VVLMLIHQFITFGFACTPLYF). The Cytoplasmic portion of the chain corresponds to 345–365 (VWEKAIGVHGGAGVLRRAAAR). Residues 366–386 (LPVVLPIWFLAVIFPFFGPIN) form a helical membrane-spanning segment. Residue serine 387 is a topological domain, extracellular. A helical transmembrane segment spans residues 388 to 408 (TVGSFLVSFTVYIIPAMAHMA). Residues 409–433 (TFAPAAARENAVEPPPRALGGWPGT) lie on the Cytoplasmic side of the membrane. Residues 434–454 (FAANCFVVAWVLVVGFGFGGW) traverse the membrane as a helical segment. The Extracellular portion of the chain corresponds to 455 to 480 (ASTVNFVRQVDTFGLFTKCYQCPPRH).

Belongs to the amino acid/polyamine transporter 2 family. Amino acid/auxin permease (AAAP) (TC 2.A.18.1) subfamily.

It is found in the cell membrane. Its function is as follows. Carrier protein involved in proton-driven auxin influx. May mediate the formation of auxin gradient from developing leaves (site of auxin biosynthesis) to tips. This chain is Putative auxin transporter-like protein 4, found in Oryza sativa subsp. japonica (Rice).